The sequence spans 565 residues: Adenine deaminase (565 aa).

It belongs to the metallo-dependent hydrolases superfamily. Adenine deaminase family. Mn(2+) serves as cofactor.

The enzyme catalyses adenine + H2O + H(+) = hypoxanthine + NH4(+). This Methylobacterium nodulans (strain LMG 21967 / CNCM I-2342 / ORS 2060) protein is Adenine deaminase.